Here is a 321-residue protein sequence, read N- to C-terminus: Endochitinase 33 (321 aa).

The N-terminal stretch at methionine 1 to alanine 19 is a signal peptide. One can recognise a GH18 domain in the interval glutamine 27–arginine 321. Glutamate 167 serves as the catalytic Proton donor.

Belongs to the glycosyl hydrolase 18 family. Chitinase class III subfamily. As to quaternary structure, monomer.

It is found in the secreted. It catalyses the reaction Random endo-hydrolysis of N-acetyl-beta-D-glucosaminide (1-&gt;4)-beta-linkages in chitin and chitodextrins.. Functionally, secreted chitinase involved in the degradation of chitin, a component of the cell walls of fungi and exoskeletal elements of some animals (including worms and arthropods). Plays a morphogenetic role during apical growth, cell division and differentiation (cell wall morphogenesis). May be involved in the degradation and further assimilation of phytopathogenic fungi, namely mycoparasitism, the major mechanism accounting for the antagonistic activity against phytopathogenic fungi displayed by Trichoderma. The protein is Endochitinase 33 (chit33) of Trichoderma harzianum (Hypocrea lixii).